Here is a 382-residue protein sequence, read N- to C-terminus: ATP phosphoribosyltransferase regulatory subunit (382 aa).

Belongs to the class-II aminoacyl-tRNA synthetase family. HisZ subfamily. Heteromultimer composed of HisG and HisZ subunits.

The protein localises to the cytoplasm. It functions in the pathway amino-acid biosynthesis; L-histidine biosynthesis; L-histidine from 5-phospho-alpha-D-ribose 1-diphosphate: step 1/9. Required for the first step of histidine biosynthesis. May allow the feedback regulation of ATP phosphoribosyltransferase activity by histidine. The protein is ATP phosphoribosyltransferase regulatory subunit of Burkholderia thailandensis (strain ATCC 700388 / DSM 13276 / CCUG 48851 / CIP 106301 / E264).